We begin with the raw amino-acid sequence, 234 residues long: Leucyl/phenylalanyl-tRNA--protein transferase (234 aa).

This sequence belongs to the L/F-transferase family.

The protein localises to the cytoplasm. It catalyses the reaction N-terminal L-lysyl-[protein] + L-leucyl-tRNA(Leu) = N-terminal L-leucyl-L-lysyl-[protein] + tRNA(Leu) + H(+). It carries out the reaction N-terminal L-arginyl-[protein] + L-leucyl-tRNA(Leu) = N-terminal L-leucyl-L-arginyl-[protein] + tRNA(Leu) + H(+). The enzyme catalyses L-phenylalanyl-tRNA(Phe) + an N-terminal L-alpha-aminoacyl-[protein] = an N-terminal L-phenylalanyl-L-alpha-aminoacyl-[protein] + tRNA(Phe). Functions in the N-end rule pathway of protein degradation where it conjugates Leu, Phe and, less efficiently, Met from aminoacyl-tRNAs to the N-termini of proteins containing an N-terminal arginine or lysine. The protein is Leucyl/phenylalanyl-tRNA--protein transferase of Tolumonas auensis (strain DSM 9187 / NBRC 110442 / TA 4).